A 209-amino-acid polypeptide reads, in one-letter code: Response regulator protein VraR (209 aa).

Residues 4-120 (KVLFVDDHEM…DIADAVRKTS (117 aa)) enclose the Response regulatory domain. Position 55 is a 4-aspartylphosphate (aspartate 55). The HTH luxR-type domain maps to 141-206 (RAELYEMLTE…QAVIYAFQHN (66 aa)). A DNA-binding region (H-T-H motif) is located at residues 165–184 (NQEIASASHITIKTVKTHVS).

Homodimer. In terms of processing, phosphorylated by VraS. Phosphorylation state of VraR controls dimerization of the protein.

Member of the two-component regulatory system VraS/VraR involved in the control of the cell wall peptidoglycan biosynthesis. Upon cellular stress, the histidine kinase VraS transfers the phosphoryl group onto VraR. Upon phosphorylation, VraR dimerizes at the N-terminal domain. In turn, phosphorylation-induced dimerization expand and enhance the VraR binding to its own promoter leading to increased expression and subsequent modulation of as many as 40 genes, which ultimately constitute the S.aureus response to cell wall damage. In addition, inhibits the host autophagic flux and delays the early stage of autophagosome formation, thereby promoting bacterial survival. Facilitates the ability of S.aureus to resist host polymorphonuclear leukocytes-mediated phagocytosis and killing thus contributing to immune evasion. This is Response regulator protein VraR (vraR) from Staphylococcus aureus (strain NCTC 8325 / PS 47).